A 119-amino-acid chain; its full sequence is ATP-dependent Clp protease adapter protein ClpS (119 aa).

The tract at residues 1-24 (MGPESPDSIPPHGPGNGDGDQDLD) is disordered.

The protein belongs to the ClpS family. In terms of assembly, binds to the N-terminal domain of the chaperone ClpA.

In terms of biological role, involved in the modulation of the specificity of the ClpAP-mediated ATP-dependent protein degradation. In Gluconobacter oxydans (strain 621H) (Gluconobacter suboxydans), this protein is ATP-dependent Clp protease adapter protein ClpS.